The sequence spans 98 residues: Feather beta keratin (98 aa).

Ser-2 bears the N-acetylserine mark.

The protein belongs to the avian keratin family. As to quaternary structure, the avian keratins (F-ker, S-ker, C-ker and B-ker) are a complex mixture of very similar polypeptides.

In Mycteria americana (Wood stork), this protein is Feather beta keratin.